We begin with the raw amino-acid sequence, 356 residues long: Fructose-bisphosphate aldolase 1, chloroplastic (356 aa).

A chloroplast-targeting transit peptide spans glycine 1 to alanine 6. Substrate contacts are provided by arginine 53 and lysine 143. Glutamate 183 serves as the catalytic Proton acceptor. Catalysis depends on lysine 225, which acts as the Schiff-base intermediate with dihydroxyacetone-P.

It belongs to the class I fructose-bisphosphate aldolase family.

The protein localises to the plastid. The protein resides in the chloroplast. It carries out the reaction beta-D-fructose 1,6-bisphosphate = D-glyceraldehyde 3-phosphate + dihydroxyacetone phosphate. It functions in the pathway carbohydrate degradation; glycolysis; D-glyceraldehyde 3-phosphate and glycerone phosphate from D-glucose: step 4/4. The protein is Fructose-bisphosphate aldolase 1, chloroplastic of Pisum sativum (Garden pea).